The primary structure comprises 132 residues: Fertilization-influencing membrane protein (132 aa).

Residues 100–120 (PGLFHHILVGLLVVAFFFLLF) traverse the membrane as a helical segment.

Testis-specific.

The protein resides in the cell membrane. May play a role in sperm-oocyte fusion during fertilization. The polypeptide is Fertilization-influencing membrane protein (Homo sapiens (Human)).